The sequence spans 519 residues: Putative tyrosine carboxypeptidase MATCAP2 (519 aa).

Residues 63 to 103 form a disordered region; the sequence is SKEEKKHRSQKRFSSASSKQHRKPSKSPSSSHSKDPSRMTA. A Zn(2+)-binding site is contributed by His-330. The active-site Nucleophile is Glu-331. 2 residues coordinate Zn(2+): His-335 and Glu-366.

It depends on Zn(2+) as a cofactor.

Its function is as follows. Putative tyrosine carboxypeptidase. The protein is Putative tyrosine carboxypeptidase MATCAP2 of Mus musculus (Mouse).